The following is a 395-amino-acid chain: Guanine nucleotide-binding protein subunit beta-5 (395 aa).

WD repeat units lie at residues 103-142, 145-184, 193-234, 236-278, 279-318, 320-362, and 365-394; these read GHGN…KEHA, MPCT…NENM, MHTN…QSFH, HGAD…QAFE, THES…EVAI, SKES…RVSI, and GHEN…LRVW.

Belongs to the WD repeat G protein beta family. As to quaternary structure, component of a complex composed of RGS9 (isoform RGS9-1), GNB5 and RGS9BP; within this complex, the presence of GNB5 stabilizes both itself and RGS9 and increases RGS9 GTPase-activating protein (GAP) activity. Interacts with RGS7, forming the RGS7-GNB5 complex; within this complex, the presence of GNB5 increases RGS7 GTPase-activating protein (GAP) activity. Interacts with GPR158; promotes the GTPase activator activity of the RGS7-GNB5 complex in absence of glycine, in contrast GTPase activator activity of the RGS7-GNB5 complex is inhibited in presence of glycine. Interacts with RGS6. Isoform 1 is only detected in retina. Isoform 2 is detected in brain (at protein level). Isoform 2 is detected in brain.

Its subcellular location is the membrane. Its function is as follows. Enhances GTPase-activating protein (GAP) activity of regulator of G protein signaling (RGS) proteins, such as RGS7 and RGS9, hence involved in the termination of the signaling initiated by the G protein coupled receptors (GPCRs) by accelerating the GTP hydrolysis on the G-alpha subunits, thereby promoting their inactivation. Increases RGS7 GTPase-activating protein (GAP) activity, thereby regulating mood and cognition. Increases RGS9 GTPase-activating protein (GAP) activity, hence contributes to the deactivation of G protein signaling initiated by D(2) dopamine receptors. May play an important role in neuronal signaling, including in the parasympathetic, but not sympathetic, control of heart rate. The chain is Guanine nucleotide-binding protein subunit beta-5 (Gnb5) from Mus musculus (Mouse).